The primary structure comprises 345 residues: Acetylserotonin O-methyltransferase (345 aa).

S-adenosyl-L-methionine is bound by residues Tyr147, Trp164, Asp210, 235–237 (GDF), and Arg252. His255 serves as the catalytic Proton donor/acceptor. 3 residues coordinate substrate: Asp256, Asn302, and Gln306.

This sequence belongs to the class I-like SAM-binding methyltransferase superfamily. Cation-independent O-methyltransferase family. As to quaternary structure, homodimer. As to expression, highly expressed in pineal gland. In the retina, 10- to 100-fold lower expression compared to pineal gland, if any.

It catalyses the reaction N-acetylserotonin + S-adenosyl-L-methionine = melatonin + S-adenosyl-L-homocysteine + H(+). Its pathway is aromatic compound metabolism; melatonin biosynthesis; melatonin from serotonin: step 1/2. Catalyzes the transfer of a methyl group onto N-acetylserotonin, producing melatonin (N-acetyl-5-methoxytryptamine). In Macaca mulatta (Rhesus macaque), this protein is Acetylserotonin O-methyltransferase (ASMT).